We begin with the raw amino-acid sequence, 241 residues long: Bidirectional sugar transporter SWEET17 (241 aa).

Residues 1 to 3 (MAE) lie on the Vacuolar side of the membrane. A helical membrane pass occupies residues 4–24 (ASFYIGVIGNVISVLVFLSPV). A MtN3/slv 1 domain is found at 6-92 (FYIGVIGNVI…SLFLFYAPRH (87 aa)). At 25 to 41 (ETFWKIVKRRSTEEYKS) the chain is on the cytoplasmic side. The helical transmembrane segment at 42-62 (LPYICTLLGSSLWTYYGIVTP) threads the bilayer. The Vacuolar portion of the chain corresponds to 63 to 69 (GEYLVST). The helical transmembrane segment at 70–90 (VNGFGALVETIYVSLFLFYAP) threads the bilayer. The Cytoplasmic portion of the chain corresponds to 91–94 (RHLK). Residues 95-115 (LKTVDVDAMLNVFFPIAAIVA) form a helical membrane-spanning segment. Over 116–128 (TRSAFEDEKMRSQ) the chain is Vacuolar. Residues 129 to 149 (SIGFISAGLNIIMYGSPLSAM) form a helical membrane-spanning segment. The MtN3/slv 2 domain maps to 129–212 (SIGFISAGLN…LILYGIYRNA (84 aa)). Residues 150–161 (KTVVTTKSVKYM) lie on the Cytoplasmic side of the membrane. A helical membrane pass occupies residues 162-182 (PFWLSFFLFLNGAIWAVYALL). Residues 183–185 (QHD) lie on the Vacuolar side of the membrane. Residues 186-206 (VFLLVPNGVGFVFGTMQLILY) form a helical membrane-spanning segment. Residues 207–241 (GIYRNAKPVGLSNGLSEIAQDEEEGLTSRVEPLLS) lie on the Cytoplasmic side of the membrane.

It belongs to the SWEET sugar transporter family. Forms homooligomers and heterooligomers with SWEET1, SWEET2, SWEET3, SWEET4, SWEET6, SWEET7, SWEET8, SWEET9, SWEET11, SWEET12, SWEET13, SWEET15 and SWEET16. As to expression, expressed in leaves at low levels, mostly in xylem and parenchyma. Highly expressed in the cortex of roots, predominantly in tips and mature regions, especially in tonoplasts. Also accumulates in cotyledons, stems, flowers, and siliques.

Its subcellular location is the vacuole membrane. In terms of biological role, acts as a vacuolar hexose transporter. Regulates fructose (Fru) homeostasis in leaves and roots by exporting/importing Fru through the tonoplast regarding metabolic demand. This Arabidopsis thaliana (Mouse-ear cress) protein is Bidirectional sugar transporter SWEET17.